The sequence spans 342 residues: Phosphate acyltransferase (342 aa).

This sequence belongs to the PlsX family. Homodimer. Probably interacts with PlsY.

Its subcellular location is the cytoplasm. It carries out the reaction a fatty acyl-[ACP] + phosphate = an acyl phosphate + holo-[ACP]. It functions in the pathway lipid metabolism; phospholipid metabolism. Catalyzes the reversible formation of acyl-phosphate (acyl-PO(4)) from acyl-[acyl-carrier-protein] (acyl-ACP). This enzyme utilizes acyl-ACP as fatty acyl donor, but not acyl-CoA. The chain is Phosphate acyltransferase from Shewanella loihica (strain ATCC BAA-1088 / PV-4).